The sequence spans 95 residues: Integration host factor subunit beta (95 aa).

The protein belongs to the bacterial histone-like protein family. In terms of assembly, heterodimer of an alpha and a beta chain.

Functionally, this protein is one of the two subunits of integration host factor, a specific DNA-binding protein that functions in genetic recombination as well as in transcriptional and translational control. The polypeptide is Integration host factor subunit beta (Shewanella putrefaciens (strain CN-32 / ATCC BAA-453)).